We begin with the raw amino-acid sequence, 348 residues long: MKKTIVALAVAAVAATSANAATVYNQDGTKVDVNGSVRLLLKKEKDKRGDLMDNGSRVSFKASHDLGEGLSALAYAELRFSKDVKNKDGEVIKQPIGNNVHAKRLYAGFAYEGVGTLTFGNQLTIGDDVGVSDYTYFLGGINNLLSSGEKAINFKSAEFNGLTFGGAYVFSDDFDKNGLRDGRGFVVAGLYNRKIGDVGFAFEAGYSQKYVKQEVASVLPPPPGSVTVYKDEKEKAFMVGAELSYAGLALGVDYAQSKVTNVDGKKRALEVGLNYDINDKAKVYTDFIWAKEGPKGATTRDRSIILGAGYKLHKQVETFVEGGWGREKDANGVTTKDNVVGVGLRVHF.

Positions 1–20 (MKKTIVALAVAAVAATSANA) are cleaved as a signal peptide.

As to quaternary structure, disulfide bond interactions within and between MOMP molecules and other components form high molecular-weight oligomers.

It is found in the cell outer membrane. Structural rigidity of the outer membrane of elementary bodies and porin forming, permitting diffusion of solutes through the intracellular reticulate body membrane. In Pasteurella multocida (strain Pm70), this protein is Major outer membrane protein (ompH).